We begin with the raw amino-acid sequence, 835 residues long: Microcephalin (835 aa).

The BRCT 1 domain occupies Met-1–Ala-93. Phosphoserine is present on residues Ser-279, Ser-287, Ser-296, and Ser-333. Disordered stretches follow at residues Leu-332–Ser-376 and Ser-417–Phe-442. Thr-335 carries the post-translational modification Phosphothreonine. The segment covering Leu-343–His-361 has biased composition (basic residues). The residue at position 548 (Ser-548) is a Phosphoserine. The segment at Ala-555–Glu-583 is disordered. The span at Lys-559–Glu-577 shows a compositional bias: polar residues. BRCT domains are found at residues Ser-640–Leu-730 and Tyr-751–Leu-833.

Interacts with CDC27 and maybe other components of the APC/C complex. Interacts with histone variant H2AX under DNA damage conditions.

Its subcellular location is the cytoplasm. It is found in the cytoskeleton. It localises to the microtubule organizing center. The protein localises to the centrosome. Functionally, implicated in chromosome condensation and DNA damage induced cellular responses. May play a role in neurogenesis and regulation of the size of the cerebral cortex. This is Microcephalin from Pan troglodytes (Chimpanzee).